Reading from the N-terminus, the 26-residue chain is FLPLLILGSLLMTPPVIQAIHDAQRG.

At Arg25 the chain carries Arginine amide; in delta-paraponeritoxin-Pc1a.

In terms of processing, the glycine-PoTx is a non-amidated form of poneratoxin, with an extra-Gly at C-terminus. This loss of amidation does not alter toxin activity on Nav1.7/SCN9A. As to expression, expressed by the venom gland.

It localises to the secreted. Functionally, toxin that causes pain in vertebrates by targeting tetrodotoxin (TTX)-sensitive sodium channels in peripheral sensory neurons. Also blocks synaptic transmission and stimulates smooth muscle contraction. Converts the normally rapidly activating and inactivating sodium channel current into one that does not inactivate. Is active on both Nav1.6/SCN8A and Nav1.7/SCN9A sodium channels, with a much potent activity on Nav1.6/SCN8A (EC(50)=97 nM on human channels) than on Nav1.7/SCN9A (EC(50)=2.3 uM on human and EC(50)=1.8 uM on mouse channels). On these channels, causes a sustained current, a reduction in peak current amplitude and a hyperpolarising shift. Modulates Nav1.7/SCN9A in a non-competitive manner with TTX or tetracaine. Toxin-induced persistant current is very slowly reversible with repeated wash steps over 30 minutes. In vivo, shallow intraplantar injection in mice causes immediate, long-lasting and near-maximal nocifensive behaviors, which decrease with coinjection of TTX. When tested on insects, causes paralysis but not mortality at high doses. The sequence is that of Glycyl-poneratoxin from Paraponera clavata (Bullet ant).